Reading from the N-terminus, the 683-residue chain is Multidrug resistance protein MdtO (683 aa).

Helical transmembrane passes span 43-63 (VILI…AVLF), 75-95 (FVAI…FLIY), 100-120 (GEPL…MFLM), 125-145 (LGLV…FPAM), 158-178 (WCIV…VLWF), 402-422 (FGGA…VMPW), 426-446 (IVEL…IATS), 457-477 (MVVT…YDLV), and 483-503 (ALGI…VWPE).

It belongs to the MdtO family. As to quaternary structure, could be part of a tripartite efflux system composed of MdtN, MdtO and MdtP.

It is found in the cell inner membrane. Its function is as follows. Could be involved in resistance to puromycin, acriflavine and tetraphenylarsonium chloride. In Escherichia coli (strain K12), this protein is Multidrug resistance protein MdtO (mdtO).